Consider the following 498-residue polypeptide: Glycerol kinase (498 aa).

Position 12 (threonine 12) interacts with ADP. Threonine 12, threonine 13, and serine 14 together coordinate ATP. Threonine 12 serves as a coordination point for sn-glycerol 3-phosphate. Arginine 16 is a binding site for ADP. Sn-glycerol 3-phosphate is bound by residues arginine 82, glutamate 83, and tyrosine 134. Residues arginine 82, glutamate 83, and tyrosine 134 each contribute to the glycerol site. At histidine 230 the chain carries Phosphohistidine; by HPr. Aspartate 244 contacts sn-glycerol 3-phosphate. 2 residues coordinate glycerol: aspartate 244 and glutamine 245. Threonine 266, glycine 309, glutamine 313, glycine 410, and asparagine 414 together coordinate ADP. 4 residues coordinate ATP: threonine 266, glycine 309, glutamine 313, and glycine 410.

The protein belongs to the FGGY kinase family. Homotetramer and homodimer (in equilibrium). The phosphoenolpyruvate-dependent sugar phosphotransferase system (PTS), including enzyme I, and histidine-containing protein (HPr) are required for the phosphorylation, which leads to the activation of the enzyme.

It catalyses the reaction glycerol + ATP = sn-glycerol 3-phosphate + ADP + H(+). It functions in the pathway polyol metabolism; glycerol degradation via glycerol kinase pathway; sn-glycerol 3-phosphate from glycerol: step 1/1. Its activity is regulated as follows. Activated by phosphorylation and inhibited by fructose 1,6-bisphosphate (FBP). Its function is as follows. Key enzyme in the regulation of glycerol uptake and metabolism. Catalyzes the phosphorylation of glycerol to yield sn-glycerol 3-phosphate. The chain is Glycerol kinase from Staphylococcus aureus (strain COL).